The primary structure comprises 329 residues: Cardiolipin synthase (CMP-forming) (329 aa).

A mitochondrion-targeting transit peptide spans 1–34 (MPPSVATHASLLLKAAAAAAHLHPKPFFSPRAAP). The tract at residues 27–55 (FFSPRAAPPRIPSAPAPPAAGGSRYRPTT) is disordered. Residues 32-44 (AAPPRIPSAPAPP) are compositionally biased toward pro residues. Transmembrane regions (helical) follow at residues 134 to 154 (LLTLPTVLTIGRVAAVPLLIS), 156 to 176 (FYMEGPWAATATTGIFLAAAV), 194 to 214 (FGAFLDPVADKLMVAATLVLL), 228 to 248 (PWLLTVPAIAIIGREITMSAV), and 298 to 318 (VTSGIALLYVSAGLAIWSLVV). Topologically, residues 319 to 329 (YMRKIWRILLK) are mitochondrial intermembrane.

Belongs to the CDP-alcohol phosphatidyltransferase class-I family. The cofactor is Mn(2+).

The protein resides in the mitochondrion inner membrane. It catalyses the reaction a CDP-1,2-diacyl-sn-glycerol + a 1,2-diacyl-sn-glycero-3-phospho-(1'-sn-glycerol) = a cardiolipin + CMP + H(+). Functionally, catalyzes the synthesis of cardiolipin (CL) (diphosphatidylglycerol) by specifically transferring a phosphatidyl group from CDP-diacylglycerol to phosphatidylglycerol (PG). CL is a key phospholipid in mitochondrial membranes and plays important roles in maintaining the functional integrity and dynamics of mitochondria under both optimal and stress conditions. This Oryza sativa subsp. japonica (Rice) protein is Cardiolipin synthase (CMP-forming).